Here is a 2663-residue protein sequence, read N- to C-terminus: Ankyrin repeat domain-containing protein 11 (2663 aa).

Disordered regions lie at residues 1 to 90 (MPKG…KEPV) and 128 to 169 (SANS…ERGE). 2 stretches are compositionally biased toward basic and acidic residues: residues 21 to 54 (MVEK…VRER) and 69 to 90 (EQKD…KEPV). Residues 128 to 155 (SANSPVDTTPKHPSQSTVCQKGTPNSAS) are compositionally biased toward polar residues. The segment covering 156 to 169 (KTKDKVNKRNERGE) has biased composition (basic and acidic residues). 4 ANK repeats span residues 167-196 (RGET…DVNV), 200-229 (AGWT…EVNT), 233-262 (DDDT…NPQQ), and 266-292 (KGET…YTSS). Phosphoserine is present on S276. Disordered stretches follow at residues 289-380 (YTSS…SNSF), 398-647 (APKK…GQCS), and 723-783 (DTNK…NDLK). Residues 295-305 (SSTESSEEEDA) are compositionally biased toward acidic residues. The segment covering 309-320 (APSSSVDGNNTD) has biased composition (polar residues). Residues 356-376 (DRVPPVDDKHLLKKDYRKETK) are compositionally biased toward basic and acidic residues. Residue S408 is modified to Phosphoserine. T410 carries the phosphothreonine modification. A Phosphoserine modification is found at S411. The segment covering 438-451 (KTREPSNAKQQKEK) has biased composition (basic and acidic residues). Residues 452–462 (NKVKKKRKKET) show a composition bias toward basic residues. A compositionally biased stretch (basic and acidic residues) spans 463–477 (KGREVRFGKRSDKFC). A compositionally biased stretch (acidic residues) spans 481 to 493 (SESESSESGEDDR). Over residues 513–531 (SLFSSLSASSTSSHGSSAA) the composition is skewed to low complexity. A compositionally biased stretch (basic and acidic residues) spans 539–550 (TDQHTKHWRTDN). A compositionally biased stretch (polar residues) spans 551–562 (WKTISSPAWSEV). The span at 576–588 (ESDYSSEGSSVES) shows a compositional bias: low complexity. Composition is skewed to basic residues over residues 591–602 (PVRKRQEHRKRA) and 629–641 (VKKH…HKNK). S834 bears the Phosphoserine mark. Basic and acidic residues-rich tracts occupy residues 881 to 928 (VKED…EKHK), 935 to 1043 (SEKD…KSIL), 1059 to 1090 (KKDT…KEKA), and 1099 to 1112 (FSEK…KEKS). 2 disordered regions span residues 881-1043 (VKED…KSIL) and 1059-1393 (KKDT…GQYE). S1079 carries the phosphoserine modification. T1120 carries the post-translational modification Phosphothreonine. S1123 carries the phosphoserine modification. Composition is skewed to basic and acidic residues over residues 1142-1301 (DLPR…DKIS), 1330-1347 (GDDK…LKEK), and 1359-1393 (KSHD…GQYE). T1419 carries the post-translational modification Phosphothreonine. 5 stretches are compositionally biased toward basic and acidic residues: residues 1424–1446 (STEK…KELK), 1466–1545 (REKW…KGDP), 1556–1574 (APSK…KLLG), 1587–1597 (LSQKDLEIEER), and 1605–1639 (MKQM…DIPA). The disordered stretch occupies residues 1424 to 1710 (STEKKDKNDS…TGVPTPTSVL (287 aa)). The residue at position 1509 (S1509) is a Phosphoserine. Phosphoserine is present on S1692. A compositionally biased stretch (polar residues) spans 1698-1710 (SRPTGVPTPTSVL). S1792 carries the post-translational modification Phosphoserine. Residues 1814–1836 (SVPAASSYDSPMPPSMEDRAPLP) are disordered. S1847 carries the post-translational modification Phosphoserine. A phosphotyrosine mark is found at Y1850 and Y1851. Phosphoserine occurs at positions 1852, 1859, and 1990. Disordered regions lie at residues 1988–2019 (PESP…PAPP) and 2131–2406 (LDLG…STQQ). Low complexity-rich tracts occupy residues 2310-2324 (IQPE…AEAP) and 2391-2406 (RSTQ…STQQ). The interval 2369–2663 (AKARGSEDDD…VNDDFVLLPA (295 aa)) is important for protein degradation.

As to quaternary structure, interacts with the PAS region of the p160 coactivators. In terms of processing, subject to proteasomal degradation which is probably essential to regulate its activity.

Its subcellular location is the nucleus. Its function is as follows. Chromatin regulator which modulates histone acetylation and gene expression in neural precursor cells. May recruit histone deacetylases (HDACs) to the p160 coactivators/nuclear receptor complex to inhibit ligand-dependent transactivation. Has a role in proliferation and development of cortical neural precursors. May also regulate bone homeostasis. This is Ankyrin repeat domain-containing protein 11 (ANKRD11) from Homo sapiens (Human).